The chain runs to 295 residues: Nitrogenase iron protein (295 aa).

Residue 10–17 coordinates ATP; sequence GKGGIGKS. Cys-98 provides a ligand contact to [4Fe-4S] cluster. At Arg-101 the chain carries ADP-ribosylarginine; by dinitrogenase reductase ADP-ribosyltransferase. [4Fe-4S] cluster is bound at residue Cys-133.

It belongs to the NifH/BchL/ChlL family. Homodimer. It depends on [4Fe-4S] cluster as a cofactor. The reversible ADP-ribosylation of Arg-101 inactivates the nitrogenase reductase and regulates nitrogenase activity.

The catalysed reaction is N2 + 8 reduced [2Fe-2S]-[ferredoxin] + 16 ATP + 16 H2O = H2 + 8 oxidized [2Fe-2S]-[ferredoxin] + 2 NH4(+) + 16 ADP + 16 phosphate + 6 H(+). Its function is as follows. The key enzymatic reactions in nitrogen fixation are catalyzed by the nitrogenase complex, which has 2 components: the iron protein and the molybdenum-iron protein. The protein is Nitrogenase iron protein of Tolumonas auensis (strain DSM 9187 / NBRC 110442 / TA 4).